The sequence spans 312 residues: Polyamine aminopropyltransferase (312 aa).

One can recognise a PABS domain in the interval 7–247 (FFWVQEYFTP…GPLGFALAAQ (241 aa)). An S-methyl-5'-thioadenosine-binding site is contributed by Gln36. Spermidine is bound by residues His67 and Glu95. S-methyl-5'-thioadenosine is bound by residues Asp115 and 147-148 (DA). The Proton acceptor role is filled by Asp165. An S-methyl-5'-thioadenosine-binding site is contributed by Pro174.

It belongs to the spermidine/spermine synthase family. As to quaternary structure, homodimer or homotetramer.

The protein resides in the cytoplasm. The enzyme catalyses S-adenosyl 3-(methylsulfanyl)propylamine + putrescine = S-methyl-5'-thioadenosine + spermidine + H(+). It functions in the pathway amine and polyamine biosynthesis; spermidine biosynthesis; spermidine from putrescine: step 1/1. In terms of biological role, catalyzes the irreversible transfer of a propylamine group from the amino donor S-adenosylmethioninamine (decarboxy-AdoMet) to putrescine (1,4-diaminobutane) to yield spermidine. This chain is Polyamine aminopropyltransferase, found in Synechococcus sp. (strain JA-2-3B'a(2-13)) (Cyanobacteria bacterium Yellowstone B-Prime).